Here is a 137-residue protein sequence, read N- to C-terminus: Large ribosomal subunit protein uL16 (137 aa).

Belongs to the universal ribosomal protein uL16 family. As to quaternary structure, part of the 50S ribosomal subunit.

Its function is as follows. Binds 23S rRNA and is also seen to make contacts with the A and possibly P site tRNAs. The polypeptide is Large ribosomal subunit protein uL16 (Ruegeria pomeroyi (strain ATCC 700808 / DSM 15171 / DSS-3) (Silicibacter pomeroyi)).